The sequence spans 366 residues: Chorismate synthase (366 aa).

NADP(+) is bound by residues Arg48 and Arg54. Residues 125–127 (RSS), 238–239 (NA), Gly278, 293–297 (KPTSS), and Arg319 each bind FMN.

It belongs to the chorismate synthase family. As to quaternary structure, homotetramer. FMNH2 is required as a cofactor.

It catalyses the reaction 5-O-(1-carboxyvinyl)-3-phosphoshikimate = chorismate + phosphate. It participates in metabolic intermediate biosynthesis; chorismate biosynthesis; chorismate from D-erythrose 4-phosphate and phosphoenolpyruvate: step 7/7. Functionally, catalyzes the anti-1,4-elimination of the C-3 phosphate and the C-6 proR hydrogen from 5-enolpyruvylshikimate-3-phosphate (EPSP) to yield chorismate, which is the branch point compound that serves as the starting substrate for the three terminal pathways of aromatic amino acid biosynthesis. This reaction introduces a second double bond into the aromatic ring system. In Burkholderia vietnamiensis (strain G4 / LMG 22486) (Burkholderia cepacia (strain R1808)), this protein is Chorismate synthase.